Reading from the N-terminus, the 293-residue chain is MQAFIGTGVALVTPFKKDFSVDTQALKRIVNYVIDGGVEYLVVLGTTAESATLSQDEKELVIATIVDANNGRLPLVLGIGGNNTMKVVEELKTRDFSKFSAVLSVSPYYNKPTQEGIYQHFKMVAEASPIPVILYNVPGRTASNMLPETVLRLAKDFKNLIGIKEAAGDIVQAMKLIQGKPKDFLVISGDDMITLPMILAGGSGVISVIGEGYPKEFSQMVRLGLQRKVDEAYILHYKLMNSIDMIFEQGNPSGVKEIFKSLGLSENTVRLPLVSVNEDLSNRLDLFTKQLSK.

Thr47 serves as a coordination point for pyruvate. Residue Tyr135 is the Proton donor/acceptor of the active site. Lys164 serves as the catalytic Schiff-base intermediate with substrate. Residue Ile206 participates in pyruvate binding.

Belongs to the DapA family. As to quaternary structure, homotetramer; dimer of dimers.

It localises to the cytoplasm. It carries out the reaction L-aspartate 4-semialdehyde + pyruvate = (2S,4S)-4-hydroxy-2,3,4,5-tetrahydrodipicolinate + H2O + H(+). Its pathway is amino-acid biosynthesis; L-lysine biosynthesis via DAP pathway; (S)-tetrahydrodipicolinate from L-aspartate: step 3/4. In terms of biological role, catalyzes the condensation of (S)-aspartate-beta-semialdehyde [(S)-ASA] and pyruvate to 4-hydroxy-tetrahydrodipicolinate (HTPA). This Flavobacterium psychrophilum (strain ATCC 49511 / DSM 21280 / CIP 103535 / JIP02/86) protein is 4-hydroxy-tetrahydrodipicolinate synthase.